We begin with the raw amino-acid sequence, 310 residues long: Bacteriochlorophyll synthase 34 kDa chain (310 aa).

Polar residues predominate over residues 1–13 (MSDMSDQTRLSSP). The segment at 1 to 20 (MSDMSDQTRLSSPPSLPLHK) is disordered. Transmembrane regions (helical) follow at residues 39–59 (VTWFAPTWAFMCGAIASGALG), 67–87 (LLLGMFMAGPILCGLSQVVND), 112–132 (HVYILTAVLTWIGASIALFLG), 134–154 (QVAFFVALGLVFALAYSLRPI), 166–186 (LVAISYEGLAWMAGHAAFAPL), 187–207 (TGESVTIALLYSLGAHGIMTV), 248–268 (VIGLLFHWGHPVAATVVAILL), and 287–307 (VFFNATAIMLYVWGMLAAAIG).

It localises to the cell membrane. Its pathway is porphyrin-containing compound metabolism; bacteriochlorophyll biosynthesis (light-independent). In terms of biological role, catalyzes the esterification of bacteriochlorophyllide a by geranylgeraniol-PPi. The protein is Bacteriochlorophyll synthase 34 kDa chain (bchG) of Chloroflexus aurantiacus (strain ATCC 29366 / DSM 635 / J-10-fl).